The chain runs to 679 residues: MSEPRKILVTSALPYANGSIHLGHMLEYIQTDMWVRFQKMRGNQAIYVCADDAHGSAIMLRAEREGITSEQLIDAVRAEHMGDFADFLVDFDNYHSTHSEENRELSSAIYLKLREAGHIDTRPVTQYFDPDKQMFLADRFIKGTCPKCGTADQYGDNCEACGATYAPTELKDPKSAISGATPVLKESLHYFFKLPDFEAMLKQWTRSGALQESVANKLAEWLDSGLQQWDISRDAPYFGFEIPDAPGKYFYVWLDAPIGYMASFRNLCARRPELDFDAFWGKDSGAELYHFIGKDIVNFHALFWPAMLEGAGYRKPTALNVHGYLTVNGQKMSKSRGTFVKARTYLDHLDPEYLRYYYASKLGRGVEDLDLNLEDFVQKVNSDLVGKVVNIASRCAGFIHKGNAGVLVGADPAPELLAAFREAAPGIAEAYEARDFNRAMREIMALADRANAWIAEQAPWALAKQEGQQDKVQAVCGLGINLFRQLVIFLKPVLPKLAAAAEAFLNVAPLTWADHQTLLANHQLNPFQPLMTRIEPAKVEAMIEASKEDLAAAAASQPAGNGELVKEPIAAEIDFDAFAAVDLRIALIEKCEFVEGADKLLRLSLDIGDAKRNVFSGIKSAYPDPSALEGRLTLYVANLAPRKMKFGVSEGMVLAAGPGGEEIYLLSPDSGAKPGQRVK.

The 'HIGH' region motif lies at 14 to 24; it reads PYANGSIHLGH. Zn(2+) is bound by residues cysteine 145, cysteine 148, cysteine 158, and cysteine 161. Positions 331-335 match the 'KMSKS' region motif; it reads KMSKS. Residue lysine 334 participates in ATP binding. The region spanning 577–679 is the tRNA-binding domain; sequence AFAAVDLRIA…SGAKPGQRVK (103 aa).

This sequence belongs to the class-I aminoacyl-tRNA synthetase family. MetG type 1 subfamily. In terms of assembly, homodimer. Requires Zn(2+) as cofactor.

It is found in the cytoplasm. The catalysed reaction is tRNA(Met) + L-methionine + ATP = L-methionyl-tRNA(Met) + AMP + diphosphate. Is required not only for elongation of protein synthesis but also for the initiation of all mRNA translation through initiator tRNA(fMet) aminoacylation. The sequence is that of Methionine--tRNA ligase from Pseudomonas paraeruginosa (strain DSM 24068 / PA7) (Pseudomonas aeruginosa (strain PA7)).